Reading from the N-terminus, the 188-residue chain is Scytalone dehydratase (188 aa).

Substrate-binding residues include Tyr-27, Tyr-47, and Phe-50. Active-site residues include His-82 and His-107. A substrate-binding site is contributed by Asn-128.

It belongs to the scytalone dehydratase family. Homotrimer. Each subunit contains an active site, located in the central part of the hydrophobic core of the monomer, which functions independently.

The protein resides in the endosome. It catalyses the reaction scytalone = 1,3,8-trihydroxynaphthalene + H2O. It functions in the pathway pigment biosynthesis; melanin biosynthesis. With respect to regulation, carpropamid acts as an efficient inhibitor of scytalone dehydratase activity. Scytalone dehydratase; part of the gene cluster that mediates the biosynthesis of dihydroxynaphthalene (DHN)-melanin, a bluish-green pigment and a structural component of the conidial wall. Within the pathway, catalyzes the dehydration of scytalone as well as of vermelone. In Colletotrichum orbiculare (strain 104-T / ATCC 96160 / CBS 514.97 / LARS 414 / MAFF 240422) (Cucumber anthracnose fungus), this protein is Scytalone dehydratase.